The chain runs to 352 residues: Fc receptor-like A (352 aa).

The first 30 residues, 1 to 30, serve as a signal peptide directing secretion; sequence MKLSCTLTQWALYVCPAVLLATQMLLAASS. The tract at residues 46–65 is disordered; it reads CQAAAEEDEGDEDDGDMTQS. The span at 50 to 61 shows a compositional bias: acidic residues; it reads AEEDEGDEDDGD. Ig-like C2-type domains lie at 80–169 and 182–260; these read PFHL…EAAS and PVLK…RQIS. Intrachain disulfides connect cysteine 109–cysteine 153 and cysteine 202–cysteine 250. Residues 275–310 are disordered; the sequence is KPTASETPPTEALGPLPPPPASSAEQPRFSSPDPHL.

Monomer or homodimer; disulfide-linked. Highly expressed in spleen. Expressed in immature B-cell and B-cell lines.

The protein resides in the cytoplasm. Functionally, may be implicated in B-cell differentiation and lymphomagenesis. This Mus musculus (Mouse) protein is Fc receptor-like A (Fcrla).